Here is a 113-residue protein sequence, read N- to C-terminus: Pancreatic progenitor cell differentiation and proliferation factor A (113 aa).

The protein belongs to the PPDPF family.

Probable regulator of exocrine pancreas development. This Xenopus laevis (African clawed frog) protein is Pancreatic progenitor cell differentiation and proliferation factor A (ppdpf-a).